Here is a 496-residue protein sequence, read N- to C-terminus: Aldehyde dehydrogenase 1A1 (496 aa).

2 positions are modified to N6-acetyllysine: Lys-86 and Lys-123. Residues 162 to 165 (IPWN), 188 to 191 (KPAE), 221 to 222 (GP), and 241 to 242 (GS) contribute to the NAD(+) site. The residue at position 247 (Lys-247) is an N6-acetyllysine. Glu-264 (proton acceptor) is an active-site residue. 264–266 (ELG) serves as a coordination point for NAD(+). Cys-298 acts as the Nucleophile in catalysis. Positions 331-496 (LAPEVNQGPQ…VTVKISQKNS (166 aa)) are mediates interaction with PRMT3. 344-348 (EQYNK) provides a ligand contact to NAD(+). 2 positions are modified to N6-acetyllysine: Lys-348 and Lys-362. Residue 395 to 397 (EIF) coordinates NAD(+). Position 405 is an N6-acetyllysine (Lys-405). Ser-408 is modified (phosphoserine). N6-acetyllysine occurs at positions 414, 430, and 490.

The protein belongs to the aldehyde dehydrogenase family. In terms of assembly, homotetramer. Interacts with PRMT3; the interaction is direct, inhibits ALDH1A1 aldehyde dehydrogenase activity and is independent of the methyltransferase activity of PRMT3. In terms of processing, the N-terminus is blocked most probably by acetylation.

The protein resides in the cytoplasm. It localises to the cytosol. It is found in the cell projection. Its subcellular location is the axon. The catalysed reaction is an aldehyde + NAD(+) + H2O = a carboxylate + NADH + 2 H(+). It carries out the reaction all-trans-retinal + NAD(+) + H2O = all-trans-retinoate + NADH + 2 H(+). The enzyme catalyses 9-cis-retinal + NAD(+) + H2O = 9-cis-retinoate + NADH + 2 H(+). It catalyses the reaction 11-cis-retinal + NAD(+) + H2O = 11-cis-retinoate + NADH + 2 H(+). The catalysed reaction is 13-cis-retinal + NAD(+) + H2O = 13-cis-retinoate + NADH + 2 H(+). It carries out the reaction (E)-4-hydroxynon-2-enal + NAD(+) + H2O = (E)-4-hydroxynon-2-enoate + NADH + 2 H(+). The enzyme catalyses malonaldehyde + NAD(+) + H2O = 3-oxopropanoate + NADH + 2 H(+). It catalyses the reaction hexanal + NAD(+) + H2O = hexanoate + NADH + 2 H(+). The catalysed reaction is propanal + NAD(+) + H2O = propanoate + NADH + 2 H(+). It carries out the reaction 3-deoxyglucosone + NAD(+) + H2O = 2-dehydro-3-deoxy-D-gluconate + NADH + 2 H(+). The enzyme catalyses acetaldehyde + NAD(+) + H2O = acetate + NADH + 2 H(+). It catalyses the reaction benzaldehyde + NAD(+) + H2O = benzoate + NADH + 2 H(+). The catalysed reaction is 4-aminobutanal + NAD(+) + H2O = 4-aminobutanoate + NADH + 2 H(+). Its pathway is cofactor metabolism; retinol metabolism. Functionally, cytosolic dehydrogenase that catalyzes the irreversible oxidation of a wide range of aldehydes to their corresponding carboxylic acid. Functions downstream of retinol dehydrogenases and catalyzes the oxidation of retinaldehyde into retinoic acid, the second step in the oxidation of retinol/vitamin A into retinoic acid. This pathway is crucial to control the levels of retinol and retinoic acid, two important molecules which excess can be teratogenic and cytotoxic. Also oxidizes aldehydes resulting from lipid peroxidation like (E)-4-hydroxynon-2-enal/HNE, malonaldehyde and hexanal that form protein adducts and are highly cytotoxic. By participating for instance to the clearance of (E)-4-hydroxynon-2-enal/HNE in the lens epithelium prevents the formation of HNE-protein adducts and lens opacification. Functions also downstream of fructosamine-3-kinase in the fructosamine degradation pathway by catalyzing the oxidation of 3-deoxyglucosone, the carbohydrate product of fructosamine 3-phosphate decomposition, which is itself a potent glycating agent that may react with lysine and arginine side-chains of proteins. Also has an aminobutyraldehyde dehydrogenase activity and is probably part of an alternative pathway for the biosynthesis of GABA/4-aminobutanoate in midbrain, thereby playing a role in GABAergic synaptic transmission. In Oryctolagus cuniculus (Rabbit), this protein is Aldehyde dehydrogenase 1A1.